Here is a 336-residue protein sequence, read N- to C-terminus: tRNA N6-adenosine threonylcarbamoyltransferase (336 aa).

Fe cation-binding residues include His-108 and His-112. Substrate-binding positions include 129–133, Asp-161, Glu-178, and Ser-258; that span reads LISGG. Asp-286 is a Fe cation binding site.

Belongs to the KAE1 / TsaD family. Fe(2+) serves as cofactor.

It is found in the cytoplasm. It catalyses the reaction L-threonylcarbamoyladenylate + adenosine(37) in tRNA = N(6)-L-threonylcarbamoyladenosine(37) in tRNA + AMP + H(+). Its function is as follows. Required for the formation of a threonylcarbamoyl group on adenosine at position 37 (t(6)A37) in tRNAs that read codons beginning with adenine. Is probably involved in the transfer of the threonylcarbamoyl moiety of threonylcarbamoyl-AMP (TC-AMP) to the N6 group of A37. This is tRNA N6-adenosine threonylcarbamoyltransferase from Pyrobaculum neutrophilum (strain DSM 2338 / JCM 9278 / NBRC 100436 / V24Sta) (Thermoproteus neutrophilus).